A 279-amino-acid polypeptide reads, in one-letter code: 2-dehydro-3-deoxyphosphooctonate aldolase (279 aa).

It belongs to the KdsA family.

It is found in the cytoplasm. The catalysed reaction is D-arabinose 5-phosphate + phosphoenolpyruvate + H2O = 3-deoxy-alpha-D-manno-2-octulosonate-8-phosphate + phosphate. It functions in the pathway carbohydrate biosynthesis; 3-deoxy-D-manno-octulosonate biosynthesis; 3-deoxy-D-manno-octulosonate from D-ribulose 5-phosphate: step 2/3. Its pathway is bacterial outer membrane biogenesis; lipopolysaccharide biosynthesis. This Aromatoleum aromaticum (strain DSM 19018 / LMG 30748 / EbN1) (Azoarcus sp. (strain EbN1)) protein is 2-dehydro-3-deoxyphosphooctonate aldolase.